A 223-amino-acid polypeptide reads, in one-letter code: Cytidine deaminase 3 (223 aa).

CMP/dCMP-type deaminase domains follow at residues 21 to 154 (TEPM…FSPD) and 184 to 223 (SDCS…WYRG). Position 62 to 64 (62 to 64 (NVE)) interacts with substrate. His-75 lines the Zn(2+) pocket. Glu-77 serves as the catalytic Proton donor. Residues Cys-110 and Cys-113 each coordinate Zn(2+).

It belongs to the cytidine and deoxycytidylate deaminase family. In terms of assembly, homodimer. The cofactor is Zn(2+).

The enzyme catalyses cytidine + H2O + H(+) = uridine + NH4(+). The catalysed reaction is 2'-deoxycytidine + H2O + H(+) = 2'-deoxyuridine + NH4(+). Functionally, this enzyme scavenges exogenous and endogenous cytidine and 2'-deoxycytidine for UMP synthesis. This chain is Cytidine deaminase 3 (CDA3), found in Arabidopsis thaliana (Mouse-ear cress).